A 130-amino-acid polypeptide reads, in one-letter code: Small ribosomal subunit protein uS8 (130 aa).

The protein belongs to the universal ribosomal protein uS8 family. As to quaternary structure, part of the 30S ribosomal subunit. Contacts proteins S5 and S12.

One of the primary rRNA binding proteins, it binds directly to 16S rRNA central domain where it helps coordinate assembly of the platform of the 30S subunit. The chain is Small ribosomal subunit protein uS8 from Moorella thermoacetica (strain ATCC 39073 / JCM 9320).